The primary structure comprises 443 residues: Glucose-6-phosphate isomerase (443 aa).

The active-site Proton donor is the Glu-285. Active-site residues include His-306 and Lys-420.

It belongs to the GPI family.

It is found in the cytoplasm. It catalyses the reaction alpha-D-glucose 6-phosphate = beta-D-fructose 6-phosphate. It functions in the pathway carbohydrate biosynthesis; gluconeogenesis. Its pathway is carbohydrate degradation; glycolysis; D-glyceraldehyde 3-phosphate and glycerone phosphate from D-glucose: step 2/4. Its function is as follows. Catalyzes the reversible isomerization of glucose-6-phosphate to fructose-6-phosphate. This chain is Glucose-6-phosphate isomerase, found in Staphylococcus haemolyticus (strain JCSC1435).